Here is an 860-residue protein sequence, read N- to C-terminus: Leucine-rich repeat and death domain-containing protein 1 (860 aa).

Positions 1–103 are disordered; that stretch reads MSEKEGMSEV…TGTSQSLSSL (103 aa). The span at 50 to 72 shows a compositional bias: polar residues; it reads KSSNQIYETHPRQNTLESTSSSG. Residues 90-103 show a composition bias toward low complexity; that stretch reads TSTRTGTSQSLSSL. LRR repeat units lie at residues 139–163, 164–186, 187–210, 211–233, 235–256, 257–279, 281–302, 303–325, 326–348, 350–371, 372–394, 396–417, 419–440, 441–463, 465–486, 487–510, 512–532, 533–555, 557–578, 579–601, 603–624, 627–650, 651–673, 675–696, 697–719, and 721–742; these read LGAD…ILKI, KYVK…DSGD, LLGL…IQLL, HNLR…ISQL, NIRQ…LECL, GNLE…LPSL, TLRV…LCFL, PKLI…IREL, KNLE…IFQL, KIKE…IENF, RELR…ISCC, MLEC…IHKL, NLRK…ISHL, NNIC…IKNC, KIIK…LCAL, DSLY…SFSK, LLHL…FCSL, INLK…ISNM, SLHV…LCTL, ENLQ…ICNL, GIQK…LCQL, LEQL…LSNM, TQLK…IGEL, NLVS…LLSL, NDLQ…IYNI, and SLKE…ICKG. In terms of domain architecture, Death spans 764–852; that stretch reads EKIFKIVANN…EIMDKITALN (89 aa). Residues 856-860 form an LRR 27 repeat; that stretch reads RAIKF.

The polypeptide is Leucine-rich repeat and death domain-containing protein 1 (LRRD1) (Homo sapiens (Human)).